Reading from the N-terminus, the 525-residue chain is Nuclear polyadenylated RNA-binding protein NAB2 (525 aa).

Disordered regions lie at residues 102 to 160 (SDIA…QLQP) and 196 to 236 (QFAP…STRF). Low complexity predominate over residues 103–160 (DIAQQQQQQQQQQQPDIAQQQPQQQPQQQPQQQPQQQPQQQPQQQPQQQPQQQPQLQP). Tandem repeats lie at residues 121–124 (QQQP), 125–128 (QQQP), 129–132 (QQQP), 133–136 (QQQP), 137–140 (QQQP), 141–144 (QQQP), 145–148 (QQQP), 149–152 (QQQP), and 153–156 (QQQP). The tract at residues 121-156 (QQQPQQQPQQQPQQQPQQQPQQQPQQQPQQQPQQQP) is 10 X 4 AA tandem repeats of Q-Q-Q-P. One copy of the 10; approximate repeat lies at 157 to 160 (QLQP). Arginine 209 and arginine 222 each carry omega-N-methylarginine. The interval 209-228 (RGGGAVGKNRRGGRGGNRGG) is RNA-binding RGG-box. Residues 209-239 (RGGGAVGKNRRGGRGGNRGGRNNNSTRFNPL) form a PY-NLS nuclear localization signal region. Threonine 254 is subject to Phosphothreonine. 7 C3H1-type zinc fingers span residues 262–278 (CRLF…PHAH), 283–300 (CNEY…EFLH), 340–355 (CKFG…PFGH), 371–386 (CDKN…RKAH), 415–430 (CKFG…KYRH), 437–452 (CREG…LFGH), and 458–473 (CRFG…LFRH). The interval 503–525 (NAIIENAPPQTSFTHQEQDTEMN) is disordered. The span at 510–525 (PPQTSFTHQEQDTEMN) shows a compositional bias: polar residues.

It belongs to the ZC3H14 family. Interacts with MLP1. Interacts with PUB1. In terms of processing, methylated by HMT1.

The protein localises to the nucleus. Its subcellular location is the cytoplasm. Its function is as follows. RNA-binding protein involved in RNA processing and transcription regulation. Acts as a regulator of mRNA stability: binds the poly(A) tail of mRNAs and pre-mRNAs, preventing their degradation by the exosome. Involved in the biogenesis of circular RNAs (circRNAs) which are produced by back-splicing circularization of pre-mRNAs. Involved in mRNA poly(A) tail length control and nuclear export. Functions in surveillance and the packaging leading to generation of export-competent mRNPs. Controls both mRNP compaction that facilitates movement through nuclear pore complexes and the length of transcript poly(A) tails. Also acts as a regulator of transcription. Associates directly with nascent RNA polymerase II transcripts and remains associated during subsequent nuclear RNA processing reactions. Required for RNA polymerase III (RNAPIII) transcription: required for the occupancy of RNAPIII and Transcription factor IIIB (TFIIIB) at target genes, possibly via direct association with nascent RNAPIII transcripts. The protein is Nuclear polyadenylated RNA-binding protein NAB2 of Saccharomyces cerevisiae (strain ATCC 204508 / S288c) (Baker's yeast).